Reading from the N-terminus, the 338-residue chain is tRNA N6-adenosine threonylcarbamoyltransferase (338 aa).

The Fe cation site is built by histidine 111 and histidine 115. Substrate contacts are provided by residues 134-138, aspartate 167, glycine 180, and asparagine 272; that span reads LVSGG. Aspartate 300 provides a ligand contact to Fe cation.

It belongs to the KAE1 / TsaD family. It depends on Fe(2+) as a cofactor.

The protein resides in the cytoplasm. It carries out the reaction L-threonylcarbamoyladenylate + adenosine(37) in tRNA = N(6)-L-threonylcarbamoyladenosine(37) in tRNA + AMP + H(+). In terms of biological role, required for the formation of a threonylcarbamoyl group on adenosine at position 37 (t(6)A37) in tRNAs that read codons beginning with adenine. Is involved in the transfer of the threonylcarbamoyl moiety of threonylcarbamoyl-AMP (TC-AMP) to the N6 group of A37, together with TsaE and TsaB. TsaD likely plays a direct catalytic role in this reaction. This is tRNA N6-adenosine threonylcarbamoyltransferase from Aliivibrio salmonicida (strain LFI1238) (Vibrio salmonicida (strain LFI1238)).